Consider the following 166-residue polypeptide: Transcriptional repressor NrdR (166 aa).

Residues 3 to 34 (CPFCHFVETDVIDTRKLYEGEVIRRRRRCRAC) fold into a zinc finger. Residues 49-139 (LMVVKKDGTR…VYRAFTDIGK (91 aa)) form the ATP-cone domain.

The protein belongs to the NrdR family. The cofactor is Zn(2+).

Negatively regulates transcription of bacterial ribonucleotide reductase nrd genes and operons by binding to NrdR-boxes. This is Transcriptional repressor NrdR from Chloroflexus aurantiacus (strain ATCC 29364 / DSM 637 / Y-400-fl).